The sequence spans 54 residues: Ribulose bisphosphate carboxylase large chain (54 aa).

A propeptide spanning residues 1-2 is cleaved from the precursor; the sequence is MS. An N-acetylproline modification is found at P3. An N6,N6,N6-trimethyllysine modification is found at K14.

This sequence belongs to the RuBisCO large chain family. Type I subfamily. In terms of assembly, heterohexadecamer of 8 large chains and 8 small chains.

The protein resides in the plastid. It localises to the chloroplast. It catalyses the reaction 2 (2R)-3-phosphoglycerate + 2 H(+) = D-ribulose 1,5-bisphosphate + CO2 + H2O. The catalysed reaction is D-ribulose 1,5-bisphosphate + O2 = 2-phosphoglycolate + (2R)-3-phosphoglycerate + 2 H(+). Its function is as follows. RuBisCO catalyzes two reactions: the carboxylation of D-ribulose 1,5-bisphosphate, the primary event in carbon dioxide fixation, as well as the oxidative fragmentation of the pentose substrate in the photorespiration process. Both reactions occur simultaneously and in competition at the same active site. This is Ribulose bisphosphate carboxylase large chain (rbcL) from Rhamnus cathartica (Common buckthorn).